The primary structure comprises 20 residues: Brevinin-1SPd (20 aa).

A disulfide bridge connects residues Cys-14 and Cys-20.

In terms of tissue distribution, expressed by the skin glands.

It is found in the secreted. Functionally, antimicrobial peptide with activity against Gram-negative and Gram-positive bacteria (MIC=13 uM against E.coli, MIC=3 uM against S.aureus) and fungi (MIC=3 uM against C.albicans). Shows hemolytic activity on human erythrocytes (HC(50)=8 uM). In Lithobates septentrionalis (Mink frog), this protein is Brevinin-1SPd.